The primary structure comprises 626 residues: 4-hydroxy-3-methylbut-2-en-1-yl diphosphate synthase (flavodoxin) (626 aa).

[4Fe-4S] cluster is bound by residues Cys-521, Cys-524, Cys-555, and Glu-562.

Belongs to the IspG family. Requires [4Fe-4S] cluster as cofactor.

It carries out the reaction (2E)-4-hydroxy-3-methylbut-2-enyl diphosphate + oxidized [flavodoxin] + H2O + 2 H(+) = 2-C-methyl-D-erythritol 2,4-cyclic diphosphate + reduced [flavodoxin]. It participates in isoprenoid biosynthesis; isopentenyl diphosphate biosynthesis via DXP pathway; isopentenyl diphosphate from 1-deoxy-D-xylulose 5-phosphate: step 5/6. Converts 2C-methyl-D-erythritol 2,4-cyclodiphosphate (ME-2,4cPP) into 1-hydroxy-2-methyl-2-(E)-butenyl 4-diphosphate. This is 4-hydroxy-3-methylbut-2-en-1-yl diphosphate synthase (flavodoxin) from Bacteroides fragilis (strain ATCC 25285 / DSM 2151 / CCUG 4856 / JCM 11019 / LMG 10263 / NCTC 9343 / Onslow / VPI 2553 / EN-2).